We begin with the raw amino-acid sequence, 379 residues long: F-box/kelch-repeat protein At4g33900 (379 aa).

The 47-residue stretch at 9–55 folds into the F-box domain; it reads IKRFLMLPDDLVFNCLARVSRLHYPTLSLVSKKFRFLLASKELYQTR. Kelch repeat units follow at residues 116-175, 176-222, and 262-308; these read EIYA…TLDG, RIYV…LSIS, and SCCV…RNFK.

This chain is F-box/kelch-repeat protein At4g33900, found in Arabidopsis thaliana (Mouse-ear cress).